Consider the following 241-residue polypeptide: Uracil-DNA glycosylase (241 aa).

Catalysis depends on Asp73, which acts as the Proton acceptor.

Belongs to the uracil-DNA glycosylase (UDG) superfamily. UNG family.

It localises to the cytoplasm. The catalysed reaction is Hydrolyzes single-stranded DNA or mismatched double-stranded DNA and polynucleotides, releasing free uracil.. Functionally, excises uracil residues from the DNA which can arise as a result of misincorporation of dUMP residues by DNA polymerase or due to deamination of cytosine. The chain is Uracil-DNA glycosylase from Agrobacterium fabrum (strain C58 / ATCC 33970) (Agrobacterium tumefaciens (strain C58)).